The sequence spans 227 residues: LexA repressor (227 aa).

The H-T-H motif DNA-binding region spans Phe-25 to Thr-45. Catalysis depends on for autocatalytic cleavage activity residues Ser-148 and Lys-186.

The protein belongs to the peptidase S24 family. As to quaternary structure, homodimer.

It catalyses the reaction Hydrolysis of Ala-|-Gly bond in repressor LexA.. In terms of biological role, represses a number of genes involved in the response to DNA damage (SOS response), including recA and lexA. In the presence of single-stranded DNA, RecA interacts with LexA causing an autocatalytic cleavage which disrupts the DNA-binding part of LexA, leading to derepression of the SOS regulon and eventually DNA repair. The chain is LexA repressor from Cereibacter sphaeroides (strain ATCC 17029 / ATH 2.4.9) (Rhodobacter sphaeroides).